A 145-amino-acid chain; its full sequence is 3-dehydroquinate dehydratase (145 aa).

Residue Y24 is the Proton acceptor of the active site. Residues N76, H82, and D89 each contribute to the substrate site. H102 functions as the Proton donor in the catalytic mechanism. Substrate is bound by residues 103 to 104 and R113; that span reads VS.

This sequence belongs to the type-II 3-dehydroquinase family. As to quaternary structure, homododecamer.

It catalyses the reaction 3-dehydroquinate = 3-dehydroshikimate + H2O. It participates in metabolic intermediate biosynthesis; chorismate biosynthesis; chorismate from D-erythrose 4-phosphate and phosphoenolpyruvate: step 3/7. In terms of biological role, catalyzes a trans-dehydration via an enolate intermediate. The sequence is that of 3-dehydroquinate dehydratase from Janthinobacterium sp. (strain Marseille) (Minibacterium massiliensis).